A 128-amino-acid chain; its full sequence is uncharacterized protein (128 aa).

The protein belongs to the HesB/IscA family.

This is an uncharacterized protein from Buchnera aphidicola subsp. Baizongia pistaciae (strain Bp).